We begin with the raw amino-acid sequence, 1025 residues long: Error-prone DNA polymerase (1025 aa).

Belongs to the DNA polymerase type-C family. DnaE2 subfamily.

The protein localises to the cytoplasm. It catalyses the reaction DNA(n) + a 2'-deoxyribonucleoside 5'-triphosphate = DNA(n+1) + diphosphate. Its function is as follows. DNA polymerase involved in damage-induced mutagenesis and translesion synthesis (TLS). It is not the major replicative DNA polymerase. The protein is Error-prone DNA polymerase of Alkalilimnicola ehrlichii (strain ATCC BAA-1101 / DSM 17681 / MLHE-1).